We begin with the raw amino-acid sequence, 165 residues long: MKTSRLPIAIQQAVMRRLREKLTQANLKLGRNYPEPKLSYTQRGTSAGTAWLESYEIRLNPVLLLENSEAFIEEVVPHELAHLLVWKHFGRVAPHGKEWKWMMESVLGVPARRTHQFELQSVRRNTFPYRCKCQEHQLTVRRHNRVVRGEAVYRCVHCGEQLVAK.

Positions 20-163 (EKLTQANLKL…RCVHCGEQLV (144 aa)) constitute a SprT-like domain. His-78 serves as a coordination point for Zn(2+). Glu-79 is an active-site residue. A Zn(2+)-binding site is contributed by His-82.

The protein belongs to the SprT family. The cofactor is Zn(2+).

It localises to the cytoplasm. The chain is Protein SprT from Escherichia coli O139:H28 (strain E24377A / ETEC).